Consider the following 139-residue polypeptide: Large ribosomal subunit protein uL16 (139 aa).

The protein belongs to the universal ribosomal protein uL16 family. As to quaternary structure, part of the 50S ribosomal subunit.

In terms of biological role, binds 23S rRNA and is also seen to make contacts with the A and possibly P site tRNAs. The chain is Large ribosomal subunit protein uL16 from Treponema denticola (strain ATCC 35405 / DSM 14222 / CIP 103919 / JCM 8153 / KCTC 15104).